The sequence spans 78 residues: Small ribosomal subunit protein uS17 (78 aa).

It belongs to the universal ribosomal protein uS17 family. As to quaternary structure, part of the 30S ribosomal subunit.

Its function is as follows. One of the primary rRNA binding proteins, it binds specifically to the 5'-end of 16S ribosomal RNA. In Pelagibacter ubique (strain HTCC1062), this protein is Small ribosomal subunit protein uS17.